Here is a 127-residue protein sequence, read N- to C-terminus: Ribosome-binding factor A (127 aa).

The protein belongs to the RbfA family. Monomer. Binds 30S ribosomal subunits, but not 50S ribosomal subunits or 70S ribosomes.

It localises to the cytoplasm. One of several proteins that assist in the late maturation steps of the functional core of the 30S ribosomal subunit. Associates with free 30S ribosomal subunits (but not with 30S subunits that are part of 70S ribosomes or polysomes). Required for efficient processing of 16S rRNA. May interact with the 5'-terminal helix region of 16S rRNA. This is Ribosome-binding factor A from Geobacillus kaustophilus (strain HTA426).